The sequence spans 596 residues: mRNA export factor mex67 (596 aa).

A phosphoserine mark is found at S128, S130, and S133. LRR repeat units lie at residues 215-236 (DVIS…TTLA), 241-262 (KLLN…DPWS), and 263-282 (PKTK…PIVT). An LRRCT domain is found at 283-338 (TFANRAMDYQREMVSRFPKLRLLDGNSINSEIIASQSTVPFPVYQSFFDKVETEQI). Residues 338 to 499 (IVNSFLAAFF…ILIINDLLVI (162 aa)) enclose the NTF2 domain. The 54-residue stretch at 543 to 596 (DTRQQIVLKIKAETGLNDYYAHMCCEQNNWDYNSALASFLELKSRNVIPAEAFS) folds into the TAP-C domain.

The protein belongs to the NXF family. In terms of assembly, interacts with mlo3 and rae1.

It localises to the nucleus. The protein localises to the cytoplasm. Functionally, involved in the export of mRNA from the nucleus to the cytoplasm. The sequence is that of mRNA export factor mex67 (mex67) from Schizosaccharomyces pombe (strain 972 / ATCC 24843) (Fission yeast).